Reading from the N-terminus, the 540-residue chain is Chaperonin GroEL (540 aa).

ATP contacts are provided by residues 29–32 (TLGP), 86–90 (DGTTT), Gly413, and Asp493. Positions 520-540 (AEKPEPKPAPGPADPGAGMDF) are disordered.

This sequence belongs to the chaperonin (HSP60) family. Forms a cylinder of 14 subunits composed of two heptameric rings stacked back-to-back. Interacts with the co-chaperonin GroES.

The protein resides in the cytoplasm. It catalyses the reaction ATP + H2O + a folded polypeptide = ADP + phosphate + an unfolded polypeptide.. Functionally, together with its co-chaperonin GroES, plays an essential role in assisting protein folding. The GroEL-GroES system forms a nano-cage that allows encapsulation of the non-native substrate proteins and provides a physical environment optimized to promote and accelerate protein folding. This chain is Chaperonin GroEL, found in Tropheryma whipplei (Whipple's bacillus).